The primary structure comprises 473 residues: Probable acid phosphatase DDB_G0284755 (473 aa).

The Nucleophile role is filled by His94. The active-site Proton donor is the Asp359.

The protein belongs to the histidine acid phosphatase family.

The enzyme catalyses a phosphate monoester + H2O = an alcohol + phosphate. In Dictyostelium discoideum (Social amoeba), this protein is Probable acid phosphatase DDB_G0284755.